The following is a 326-amino-acid chain: Probable iron chelatin transport system permease protein HP_0889 (326 aa).

The next 10 helical transmembrane spans lie at 7 to 27 (IALACVILAVVVLLFGGESLS), 64 to 84 (ILALLVGASLSGSGVVMQTIF), 91 to 111 (PFLLGISSGAMLGVAMAIAVV), 113 to 133 (SNIAILAFFGAILASLAVLAM), 142 to 162 (LSLVLSGVVLSAFLSALAGAI), 164 to 184 (FFVIPQKAQAIVVWLLGSLSL), 187 to 207 (YKDCLIAFIGLSLGFIPLFLL), 241 to 261 (VASALAVSVSGTIGWIGLVIP), 275 to 295 (LLLSSLLMGAFFLLLADVVAK), and 301 to 321 (DLPVGIATSVLGAPFFLWLLF).

Belongs to the binding-protein-dependent transport system permease family. FecCD subfamily.

Its subcellular location is the cell inner membrane. Part of a binding-protein-dependent transport system for an iron chelatin; probably responsible for the translocation of the substrate across the membrane. This Helicobacter pylori (strain ATCC 700392 / 26695) (Campylobacter pylori) protein is Probable iron chelatin transport system permease protein HP_0889.